Reading from the N-terminus, the 348-residue chain is Serine/threonine-protein kinase SBK2 (348 aa).

The interval 1 to 25 (MPGKQSEEGPAEAGASEDSEEEGLG) is disordered. Positions 62-330 (YEEVRPLGQG…IREHLGRPWR (269 aa)) constitute a Protein kinase domain. ATP-binding positions include 68–76 (LGQGCYGRV) and K91. Catalysis depends on D183, which acts as the Proton acceptor.

It belongs to the protein kinase superfamily. Ser/Thr protein kinase family. STKL subfamily.

The catalysed reaction is L-seryl-[protein] + ATP = O-phospho-L-seryl-[protein] + ADP + H(+). The enzyme catalyses L-threonyl-[protein] + ATP = O-phospho-L-threonyl-[protein] + ADP + H(+). The polypeptide is Serine/threonine-protein kinase SBK2 (SBK2) (Homo sapiens (Human)).